Consider the following 410-residue polypeptide: Putative competence-damage inducible protein (410 aa).

It belongs to the CinA family.

This chain is Putative competence-damage inducible protein, found in Clostridium beijerinckii (strain ATCC 51743 / NCIMB 8052) (Clostridium acetobutylicum).